A 237-amino-acid polypeptide reads, in one-letter code: 2-C-methyl-D-erythritol 4-phosphate cytidylyltransferase (237 aa).

Belongs to the IspD/TarI cytidylyltransferase family. IspD subfamily.

The enzyme catalyses 2-C-methyl-D-erythritol 4-phosphate + CTP + H(+) = 4-CDP-2-C-methyl-D-erythritol + diphosphate. It functions in the pathway isoprenoid biosynthesis; isopentenyl diphosphate biosynthesis via DXP pathway; isopentenyl diphosphate from 1-deoxy-D-xylulose 5-phosphate: step 2/6. Catalyzes the formation of 4-diphosphocytidyl-2-C-methyl-D-erythritol from CTP and 2-C-methyl-D-erythritol 4-phosphate (MEP). The chain is 2-C-methyl-D-erythritol 4-phosphate cytidylyltransferase from Acidithiobacillus ferrooxidans (strain ATCC 23270 / DSM 14882 / CIP 104768 / NCIMB 8455) (Ferrobacillus ferrooxidans (strain ATCC 23270)).